An 814-amino-acid chain; its full sequence is Dimethyl sulfoxide reductase DmsA (814 aa).

Positions 1–45 (MKTKIPDAVLAAEVSRRGLVKTTAIGGLAMASSALTLPFSRIAHA) form a signal peptide, tat-type signal. One can recognise a 4Fe-4S Mo/W bis-MGD-type domain in the interval 56–118 (EKVIWSACTV…SMRRRVYNPD (63 aa)). Residues Cys-63, Cys-67, Cys-71, and Cys-104 each coordinate [4Fe-4S] cluster. Mo-bis(molybdopterin guanine dinucleotide) is bound by residues 172–176 (LGGTM), Ser-205, 244–245 (ET), 270–271 (ID), 291–293 (GTD), 386–387 (WG), Arg-390, Asn-488, 512–513 (ID), His-701, 707–709 (HST), Asn-788, and 804–805 (SH).

It belongs to the prokaryotic molybdopterin-containing oxidoreductase family. Heterotrimeric enzyme composed of a catalytic heterodimer (DmsAB) and a membrane anchor protein (DmsC). It depends on [4Fe-4S] cluster as a cofactor. Mo-bis(molybdopterin guanine dinucleotide) is required as a cofactor. Exported by the Tat system. The position of the signal peptide cleavage has been experimentally proven. Can also be exported by the Sec system.

The protein resides in the cell membrane. The catalysed reaction is dimethyl sulfide + a menaquinone + H2O = dimethyl sulfoxide + a menaquinol. Its activity is regulated as follows. Inhibited by dithionite, sodium hydrogensulfite and tungstate. In terms of biological role, catalyzes the reduction of dimethyl sulfoxide (DMSO) to dimethyl sulfide (DMS). DMSO reductase serves as the terminal reductase under anaerobic conditions, with DMSO being the terminal electron acceptor. Terminal reductase during anaerobic growth on various sulfoxides and N-oxide compounds. Allows E.coli to grow anaerobically on DMSO as respiratory oxidant. In Escherichia coli (strain K12), this protein is Dimethyl sulfoxide reductase DmsA (dmsA).